Reading from the N-terminus, the 351-residue chain is UDP-N-acetylenolpyruvoylglucosamine reductase (351 aa).

Residues 11-213 form the FAD-binding PCMH-type domain; that stretch reads GVGGSIACFI…KQVRDQVLRI (203 aa). The active site involves Arg-158. Ser-239 acts as the Proton donor in catalysis. The active site involves Glu-343.

The protein belongs to the MurB family. FAD serves as cofactor.

It is found in the cytoplasm. The catalysed reaction is UDP-N-acetyl-alpha-D-muramate + NADP(+) = UDP-N-acetyl-3-O-(1-carboxyvinyl)-alpha-D-glucosamine + NADPH + H(+). The protein operates within cell wall biogenesis; peptidoglycan biosynthesis. In terms of biological role, cell wall formation. This Tropheryma whipplei (strain TW08/27) (Whipple's bacillus) protein is UDP-N-acetylenolpyruvoylglucosamine reductase.